The following is a 213-amino-acid chain: A-type ATP synthase subunit D (213 aa).

The protein belongs to the V-ATPase D subunit family. As to quaternary structure, has multiple subunits with at least A(3), B(3), C, D, E, F, H, I and proteolipid K(x).

It is found in the cell membrane. Its function is as follows. Component of the A-type ATP synthase that produces ATP from ADP in the presence of a proton gradient across the membrane. The chain is A-type ATP synthase subunit D from Thermoplasma acidophilum (strain ATCC 25905 / DSM 1728 / JCM 9062 / NBRC 15155 / AMRC-C165).